A 113-amino-acid polypeptide reads, in one-letter code: Hydrogenase maturation factor HypA (113 aa).

Residue His2 coordinates Ni(2+). Cys73, Cys76, Cys89, and Cys92 together coordinate Zn(2+).

Belongs to the HypA/HybF family.

Functionally, involved in the maturation of [NiFe] hydrogenases. Required for nickel insertion into the metal center of the hydrogenase. This Aeromonas salmonicida (strain A449) protein is Hydrogenase maturation factor HypA.